The sequence spans 276 residues: Rhamnulose-1-phosphate aldolase (276 aa).

Residue E117 is part of the active site. Zn(2+) is bound by residues H141, H143, and H212.

This sequence belongs to the aldolase class II family. RhaD subfamily. Homotetramer. Zn(2+) serves as cofactor.

It localises to the cytoplasm. The catalysed reaction is L-rhamnulose 1-phosphate = (S)-lactaldehyde + dihydroxyacetone phosphate. It participates in carbohydrate degradation; L-rhamnose degradation; glycerone phosphate from L-rhamnose: step 3/3. Catalyzes the reversible cleavage of L-rhamnulose-1-phosphate to dihydroxyacetone phosphate (DHAP) and L-lactaldehyde. In Enterobacter sp. (strain 638), this protein is Rhamnulose-1-phosphate aldolase.